A 586-amino-acid polypeptide reads, in one-letter code: 3-hydroxy-3-methylglutaryl-coenzyme A reductase 3 (586 aa).

The next 2 helical transmembrane spans lie at 36–59 (PSDY…FFSV) and 87–107 (ALIC…IGFV). The interval 108 to 170 (HSFSRASTDS…STTTTSTLSD (63 aa)) is linker. Catalytic stretches follow at residues 171–586 (DDEQ…KITF) and 172–586 (DEQI…KITF). Active-site charge relay system residues include E265, K397, and D473. The Proton donor role is filled by H571. Residue N575 is glycosylated (N-linked (GlcNAc...) asparagine).

It belongs to the HMG-CoA reductase family.

It is found in the endoplasmic reticulum membrane. The protein resides in the mitochondrion membrane. Its subcellular location is the plastid membrane. The catalysed reaction is (R)-mevalonate + 2 NADP(+) + CoA = (3S)-3-hydroxy-3-methylglutaryl-CoA + 2 NADPH + 2 H(+). It functions in the pathway metabolic intermediate biosynthesis; (R)-mevalonate biosynthesis; (R)-mevalonate from acetyl-CoA: step 3/3. In terms of biological role, catalyzes the synthesis of mevalonate. The specific precursor of all isoprenoid compounds present in plants. The sequence is that of 3-hydroxy-3-methylglutaryl-coenzyme A reductase 3 (HMGR3) from Hevea brasiliensis (Para rubber tree).